A 691-amino-acid polypeptide reads, in one-letter code: Zinc finger protein 770 (691 aa).

Lys11 is covalently cross-linked (Glycyl lysine isopeptide (Lys-Gly) (interchain with G-Cter in SUMO2)). C2H2-type zinc fingers lie at residues 27 to 49 (YVCN…YLIH), 55 to 77 (FECD…QLTH), and 81 to 103 (FKCS…QQLH). Glycyl lysine isopeptide (Lys-Gly) (interchain with G-Cter in SUMO2) cross-links involve residues Lys112, Lys121, and Lys146. 3 consecutive C2H2-type zinc fingers follow at residues 160 to 182 (HACT…VLIH), 188 to 210 (FKCV…QLTH), and 216 to 238 (FQCC…KQIH). The interval 258–277 (PLPNKLNANQGGFENGEIGE) is disordered. Residue Lys262 forms a Glycyl lysine isopeptide (Lys-Gly) (interchain with G-Cter in SUMO2) linkage. A C2H2-type 7; degenerate zinc finger spans residues 294 to 318 (FQCPKCEKCFESEQILNEHSCFAAR). Glycyl lysine isopeptide (Lys-Gly) (interchain with G-Cter in SUMO2) cross-links involve residues Lys420 and Lys437. C2H2-type zinc fingers lie at residues 475-497 (CPCD…YLIH), 503-525 (FGCN…EQTH), 625-647 (YRCS…YLIH), and 653-675 (FECS…QLTH). Lys683 participates in a covalent cross-link: Glycyl lysine isopeptide (Lys-Gly) (interchain with G-Cter in SUMO2).

Belongs to the krueppel C2H2-type zinc-finger protein family.

The protein resides in the nucleus. In terms of biological role, may be involved in transcriptional regulation. This Homo sapiens (Human) protein is Zinc finger protein 770 (ZNF770).